We begin with the raw amino-acid sequence, 485 residues long: NADH-quinone oxidoreductase subunit N (485 aa).

Transmembrane regions (helical) follow at residues 8–28, 35–55, 71–91, 105–125, 127–147, 159–179, 203–223, 235–255, 271–291, 297–317, 326–346, 373–393, 408–430, and 455–475; these read LIAL…MLSI, FLNA…LWFV, GFAM…CTFA, FYLL…ANHL, SLFL…GYAF, YTIL…LVYA, LLAG…LVPF, PAPV…GVVM, VVLA…ALSQ, LLGY…IALQ, VGVY…VVSL, AAVM…LGFI, WWLV…RVAV, and IVVL…QPLI.

It belongs to the complex I subunit 2 family. NDH-1 is composed of 13 different subunits. Subunits NuoA, H, J, K, L, M, N constitute the membrane sector of the complex.

The protein localises to the cell inner membrane. It carries out the reaction a quinone + NADH + 5 H(+)(in) = a quinol + NAD(+) + 4 H(+)(out). Its function is as follows. NDH-1 shuttles electrons from NADH, via FMN and iron-sulfur (Fe-S) centers, to quinones in the respiratory chain. The immediate electron acceptor for the enzyme in this species is believed to be ubiquinone. Couples the redox reaction to proton translocation (for every two electrons transferred, four hydrogen ions are translocated across the cytoplasmic membrane), and thus conserves the redox energy in a proton gradient. This is NADH-quinone oxidoreductase subunit N from Shigella sonnei (strain Ss046).